The chain runs to 383 residues: uncharacterized protein (383 aa).

This sequence belongs to the peptidase M20 family.

This is an uncharacterized protein from Staphylococcus epidermidis (strain ATCC 12228 / FDA PCI 1200).